We begin with the raw amino-acid sequence, 338 residues long: NADPH dehydrogenase (338 aa).

S22–C25 serves as a coordination point for FMN. Y27 serves as a coordination point for substrate. Residues A59 and Q101 each coordinate FMN. H163–H166 contacts substrate. Residues R214 and G306–R307 each bind FMN.

The protein belongs to the NADH:flavin oxidoreductase/NADH oxidase family. NamA subfamily. In terms of assembly, homotetramer. The cofactor is FMN.

The enzyme catalyses A + NADPH + H(+) = AH2 + NADP(+). Functionally, catalyzes the reduction of the double bond of an array of alpha,beta-unsaturated aldehydes and ketones. It also reduces the nitro group of nitroester and nitroaromatic compounds. It could have a role in detoxification processes. The protein is NADPH dehydrogenase of Listeria innocua serovar 6a (strain ATCC BAA-680 / CLIP 11262).